Reading from the N-terminus, the 233-residue chain is MSNTPIELKGSSFTLSVVHLHDANPEVIRQALEDKIAQAPAFLRHAPVVVNIASVEEEVEWRAINEAIAATGLRIMGVSGCKIPRLKTEIDRAGIPLLTEGKEKAPRPAPSEPTPPPPPVANQITKTRLIDQPVRSGQRIYAPHCDLIVTNHVSAGAELIADGNIHVYGMMRGRALAGAGGDRDAQIFCTHLAAELVSIAGEYWLSDNIPAEFYGKAARLRLGESALTVQPLN.

The tract at residues 98–123 (LTEGKEKAPRPAPSEPTPPPPPVANQ) is disordered. Pro residues predominate over residues 107 to 120 (RPAPSEPTPPPPPV).

This sequence belongs to the MinC family. Interacts with MinD and FtsZ.

Functionally, cell division inhibitor that blocks the formation of polar Z ring septums. Rapidly oscillates between the poles of the cell to destabilize FtsZ filaments that have formed before they mature into polar Z rings. Prevents FtsZ polymerization. This Klebsiella pneumoniae (strain 342) protein is Probable septum site-determining protein MinC.